The sequence spans 81 residues: Protein Vpu (81 aa).

Residues 1–6 (MQPIQI) lie on the Extracellular side of the membrane. Residues 7–27 (AIAALVVAIIIAIVVWSIVII) form a helical membrane-spanning segment. Topologically, residues 28–81 (EYRKILRQRKIDRLIDRLIERAEDSGNESEGEISALVEMGVEMGHHAPWDIDDL) are cytoplasmic. Phosphoserine; by host CK2 occurs at positions 52 and 56.

This sequence belongs to the HIV-1 VPU protein family. In terms of assembly, homopentamer. Interacts with host CD4 and BRTC; these interactions induce proteasomal degradation of CD4. Interacts with host BST2; this interaction leads to the degradation of host BST2. Interacts with host FBXW11. Interacts with host AP1M1; this interaction plays a role in the mistrafficking and subsequent degradation of host BST2. Interacts with host RANBP2; this interaction allows Vpu to down-regulate host BLM sumoylation. In terms of processing, phosphorylated by host CK2. This phosphorylation is necessary for interaction with human BTRC and degradation of CD4.

It is found in the host membrane. Ion channel activity is inhibited by hexamethylene amiloride in vitro. In terms of biological role, enhances virion budding by targeting host CD4 and Tetherin/BST2 to proteasome degradation. Degradation of CD4 prevents any unwanted premature interactions between viral Env and its host receptor CD4 in the endoplasmic reticulum. Degradation of antiretroviral protein Tetherin/BST2 is important for virion budding, as BST2 tethers new viral particles to the host cell membrane. Mechanistically, Vpu bridges either CD4 or BST2 to BTRC, a substrate recognition subunit of the Skp1/Cullin/F-box protein E3 ubiquitin ligase, induces their ubiquitination and subsequent proteasomal degradation. The alteration of the E3 ligase specificity by Vpu seems to promote the degradation of host IKBKB, leading to NF-kappa-B down-regulation and subsequent apoptosis. Acts as a viroporin that forms an oligomeric ion channel in membranes. Modulates the host DNA repair mechanisms to promote degradation of nuclear viral cDNA in cells that are already productively infected in order to suppress immune sensing and proviral hyper-integration (superinfection). Manipulates PML-NBs and modulates SUMOylation of host BLM protein thereby enhancing its DNA-end processing activity toward viral unintegrated linear DNA. Also inhibits RAD52-mediated homologous repair of viral cDNA, preventing the generation of dead-end circular forms of single copies of the long terminal repeat and permitting sustained nucleolytic attack. The sequence is that of Protein Vpu from Homo sapiens (Human).